We begin with the raw amino-acid sequence, 223 residues long: Serine/threonine/tyrosine-interacting protein A (223 aa).

Residues 28 to 176 form the Tyrosine-protein phosphatase domain; that stretch reads EMQEILPGLF…LQEYEAIYLA (149 aa).

The protein belongs to the protein-tyrosine phosphatase family. Non-receptor class subfamily.

In terms of biological role, catalytically inactive phosphatase. This is Serine/threonine/tyrosine-interacting protein A (styx-a) from Xenopus laevis (African clawed frog).